The chain runs to 157 residues: Crossover junction endodeoxyribonuclease RuvC (157 aa).

Residues aspartate 7, glutamate 66, and aspartate 139 contribute to the active site. Aspartate 7, glutamate 66, and aspartate 139 together coordinate Mg(2+).

The protein belongs to the RuvC family. Homodimer which binds Holliday junction (HJ) DNA. The HJ becomes 2-fold symmetrical on binding to RuvC with unstacked arms; it has a different conformation from HJ DNA in complex with RuvA. In the full resolvosome a probable DNA-RuvA(4)-RuvB(12)-RuvC(2) complex forms which resolves the HJ. Requires Mg(2+) as cofactor.

The protein resides in the cytoplasm. The catalysed reaction is Endonucleolytic cleavage at a junction such as a reciprocal single-stranded crossover between two homologous DNA duplexes (Holliday junction).. Functionally, the RuvA-RuvB-RuvC complex processes Holliday junction (HJ) DNA during genetic recombination and DNA repair. Endonuclease that resolves HJ intermediates. Cleaves cruciform DNA by making single-stranded nicks across the HJ at symmetrical positions within the homologous arms, yielding a 5'-phosphate and a 3'-hydroxyl group; requires a central core of homology in the junction. The consensus cleavage sequence is 5'-(A/T)TT(C/G)-3'. Cleavage occurs on the 3'-side of the TT dinucleotide at the point of strand exchange. HJ branch migration catalyzed by RuvA-RuvB allows RuvC to scan DNA until it finds its consensus sequence, where it cleaves and resolves the cruciform DNA. This is Crossover junction endodeoxyribonuclease RuvC from Helicobacter pylori (strain P12).